Here is a 185-residue protein sequence, read N- to C-terminus: MDIDPYKEFGATVELLSFLPSDFFPSVRDLLDTASALYREALESPEHCSPHHTALRQAILCWGELMTLATWVGNNLQDPASRDLVVNYVNTNMGLKIRQLLWFHISCLTFGRETVLEYLVSFGVWIRTPPAYRPPNAPILSTLPETTVVRRRDRGRSPRRRTPSPRRRRSQSPRRRRSQSRESQC.

Positions 136–185 (NAPILSTLPETTVVRRRDRGRSPRRRTPSPRRRRSQSPRRRRSQSRESQC) are disordered. Basic residues predominate over residues 149-178 (VRRRDRGRSPRRRTPSPRRRRSQSPRRRRS). Ser157, Ser164, and Ser172 each carry phosphoserine; by host. Residues 157-163 (SPRRRTP) form a 1; half-length repeat. Residues 157–179 (SPRRRTPSPRRRRSQSPRRRRSQ) are 3 X 8 AA repeats of S-P-R-R-R-[PR]-S-Q. A Bipartite nuclear localization signal motif is present at residues 160–177 (RRTPSPRRRRSQSPRRRR). 2 tandem repeats follow at residues 164–171 (SPRRRRSQ) and 172–179 (SPRRRRSQ). The tract at residues 179–185 (QSRESQC) is RNA binding.

Belongs to the orthohepadnavirus core antigen family. In terms of assembly, homodimerizes, then multimerizes. Interacts with cytosol exposed regions of viral L glycoprotein present in the reticulum-to-Golgi compartment. Interacts with human FLNB. Phosphorylated form interacts with host importin alpha; this interaction depends on the exposure of the NLS, which itself depends upon genome maturation and/or phosphorylation of the capsid protein. Interacts with host NUP153. Post-translationally, phosphorylated by host SRPK1, SRPK2, and maybe protein kinase C or GAPDH. Phosphorylation is critical for pregenomic RNA packaging. Protein kinase C phosphorylation is stimulated by HBx protein and may play a role in transport of the viral genome to the nucleus at the late step during the viral replication cycle.

Its subcellular location is the virion. The protein resides in the host cytoplasm. In terms of biological role, self assembles to form an icosahedral capsid. Most capsids appear to be large particles with an icosahedral symmetry of T=4 and consist of 240 copies of capsid protein, though a fraction forms smaller T=3 particles consisting of 180 capsid proteins. Entering capsids are transported along microtubules to the nucleus. Phosphorylation of the capsid is thought to induce exposure of nuclear localization signal in the C-terminal portion of the capsid protein that allows binding to the nuclear pore complex via the importin (karyopherin-) alpha and beta. Capsids are imported in intact form through the nuclear pore into the nuclear basket, where it probably binds NUP153. Only capsids that contain the mature viral genome can release the viral DNA and capsid protein into the nucleoplasm. Immature capsids get stuck in the basket. Capsids encapsulate the pre-genomic RNA and the P protein. Pre-genomic RNA is reverse-transcribed into DNA while the capsid is still in the cytoplasm. The capsid can then either be directed to the nucleus, providing more genomes for transcription, or bud through the endoplasmic reticulum to provide new virions. This chain is Capsid protein, found in Homo sapiens (Human).